The primary structure comprises 423 residues: Glutamyl-tRNA reductase 2 (423 aa).

Substrate is bound by residues 48–51 (TCYR), serine 103, 108–110 (EPQ), and glutamine 114. Cysteine 49 functions as the Nucleophile in the catalytic mechanism. 183–188 (GAGEMA) contacts NADP(+).

This sequence belongs to the glutamyl-tRNA reductase family. As to quaternary structure, homodimer.

It catalyses the reaction (S)-4-amino-5-oxopentanoate + tRNA(Glu) + NADP(+) = L-glutamyl-tRNA(Glu) + NADPH + H(+). It functions in the pathway porphyrin-containing compound metabolism; protoporphyrin-IX biosynthesis; 5-aminolevulinate from L-glutamyl-tRNA(Glu): step 1/2. Functionally, catalyzes the NADPH-dependent reduction of glutamyl-tRNA(Glu) to glutamate 1-semialdehyde (GSA). In Anaeromyxobacter sp. (strain Fw109-5), this protein is Glutamyl-tRNA reductase 2.